Consider the following 393-residue polypeptide: NAD(P)H-quinone oxidoreductase subunit H, chloroplastic (393 aa).

The protein belongs to the complex I 49 kDa subunit family. NDH is composed of at least 16 different subunits, 5 of which are encoded in the nucleus.

It localises to the plastid. The protein resides in the chloroplast thylakoid membrane. The catalysed reaction is a plastoquinone + NADH + (n+1) H(+)(in) = a plastoquinol + NAD(+) + n H(+)(out). The enzyme catalyses a plastoquinone + NADPH + (n+1) H(+)(in) = a plastoquinol + NADP(+) + n H(+)(out). Its function is as follows. NDH shuttles electrons from NAD(P)H:plastoquinone, via FMN and iron-sulfur (Fe-S) centers, to quinones in the photosynthetic chain and possibly in a chloroplast respiratory chain. The immediate electron acceptor for the enzyme in this species is believed to be plastoquinone. Couples the redox reaction to proton translocation, and thus conserves the redox energy in a proton gradient. This chain is NAD(P)H-quinone oxidoreductase subunit H, chloroplastic, found in Zea mays (Maize).